The chain runs to 138 residues: Cysteine desulfuration protein SufE (138 aa).

Cysteine 51 functions as the Cysteine persulfide intermediate in the catalytic mechanism.

The protein belongs to the SufE family. Homodimer. Interacts with SufS.

It localises to the cytoplasm. It participates in cofactor biosynthesis; iron-sulfur cluster biosynthesis. Participates in cysteine desulfuration mediated by SufS. Cysteine desulfuration mobilizes sulfur from L-cysteine to yield L-alanine and constitutes an essential step in sulfur metabolism for biosynthesis of a variety of sulfur-containing biomolecules. Functions as a sulfur acceptor for SufS, by mediating the direct transfer of the sulfur atom from the S-sulfanylcysteine of SufS, an intermediate product of cysteine desulfuration process. This Escherichia coli O17:K52:H18 (strain UMN026 / ExPEC) protein is Cysteine desulfuration protein SufE.